We begin with the raw amino-acid sequence, 465 residues long: E3 ubiquitin-protein ligase TRIM15 (465 aa).

The segment at 16 to 61 adopts an RING-type zinc-finger fold; it reads CTLCVGPLEDAVTAPCGHTFCRLCLPTLSQMGAQSSGKILLCPLCQ. Residues 78-119 form a B box-type zinc finger; that stretch reads LGETYCEEHGEKIYFFCENDAEFLCVFCREGPTHQAHTVGFL. Positions 83, 86, 105, and 111 each coordinate Zn(2+). A coiled-coil region spans residues 126 to 229; that stretch reads YRDRLRSRLE…VKELEEKCQQ (104 aa). The B30.2/SPRY domain maps to 276-465; sequence EMMRMFSENL…KKGSCLTLKG (190 aa).

The protein belongs to the TRIM/RBCC family. In terms of assembly, interacts with paxillin/PXN; this interaction recruits TRIM15 to focal adhesions. Interacts with TRIM8; this interaction prevents TRIM8 cytoplasmic translocation.

The protein resides in the cytoplasm. The protein localises to the nucleus. Its subcellular location is the cell junction. It is found in the focal adhesion. The catalysed reaction is S-ubiquitinyl-[E2 ubiquitin-conjugating enzyme]-L-cysteine + [acceptor protein]-L-lysine = [E2 ubiquitin-conjugating enzyme]-L-cysteine + N(6)-ubiquitinyl-[acceptor protein]-L-lysine.. Functionally, E3 ubiquitin ligase that plays a role in several processes including innate antiviral immnity, cell migration and chemotaxis. Acts as a 'Lys-63'-specific ubiquitin ligase for MAPK1/ERK2 and MAPK3/ERK1, promoting their activation by facilitating their interaction with MAP2K1 and MAP2K2. Also plays a role in cell migration and chemotaxis by acting as a stable focal adhesion component upon recruitment by multi-adapter protein paxillin/PXN. Functions in the RIGI-mediated interferon induction pathway upstream or at the level of MAVS. Inhibits NF-kappa-B activation by turnover of 'Lys-63'-linked ubiquitination of MAP3K7/TAK1. Mechanistically, prevents TRIM8 cytoplasmic translocation and thus inhibits TRIM8-mediated 'Lys-63'-linked polyubiquitination of MAP3K7/TAK1 in the cytoplasm. Also has an important regulatory effect on the activation of hepatic stellate cells (HSCs). The protein is E3 ubiquitin-protein ligase TRIM15 (TRIM15) of Macaca mulatta (Rhesus macaque).